The chain runs to 449 residues: Biotin carboxylase (449 aa).

The Biotin carboxylation domain occupies 1–445; it reads MLEKVLIANR…NIHYLEKKLG (445 aa). Residues lysine 116, lysine 159, 165 to 166, 201 to 204, histidine 209, and histidine 236 contribute to the ATP site; these read GG and EKFL. The ATP-grasp domain maps to 120–317; the sequence is KDAMKRAGVP…IVKEMLRIAS (198 aa). Lysine 238 is a binding site for hydrogencarbonate. ATP-binding residues include glutamate 276 and glutamate 288. Mg(2+) is bound by residues glutamate 276, glutamate 288, and asparagine 290. The Mn(2+) site is built by glutamate 276, glutamate 288, and asparagine 290. Arginine 292, valine 295, and arginine 338 together coordinate hydrogencarbonate. Residue arginine 292 is part of the active site. Arginine 338 provides a ligand contact to biotin.

Acetyl-CoA carboxylase is a heterohexamer of biotin carboxyl carrier protein, biotin carboxylase and the two subunits of carboxyl transferase in a 2:2 complex. It depends on Mg(2+) as a cofactor. Requires Mn(2+) as cofactor.

The enzyme catalyses N(6)-biotinyl-L-lysyl-[protein] + hydrogencarbonate + ATP = N(6)-carboxybiotinyl-L-lysyl-[protein] + ADP + phosphate + H(+). It participates in lipid metabolism; malonyl-CoA biosynthesis; malonyl-CoA from acetyl-CoA: step 1/1. Its function is as follows. This protein is a component of the acetyl coenzyme A carboxylase complex; first, biotin carboxylase catalyzes the carboxylation of the carrier protein and then the transcarboxylase transfers the carboxyl group to form malonyl-CoA. This chain is Biotin carboxylase (accC), found in Pseudomonas aeruginosa (strain ATCC 15692 / DSM 22644 / CIP 104116 / JCM 14847 / LMG 12228 / 1C / PRS 101 / PAO1).